A 331-amino-acid polypeptide reads, in one-letter code: Cathepsin S (331 aa).

An N-terminal signal peptide occupies residues 1–16; the sequence is MNWLVWALLLCSSAMA. A propeptide spans 17 to 114 (activation peptide); that stretch reads HVHRDPTLDH…VTYKSDPNQK (98 aa). Asn-104 carries an N-linked (GlcNAc...) asparagine glycan. Intrachain disulfides connect Cys-126–Cys-224, Cys-136–Cys-180, Cys-170–Cys-213, and Cys-272–Cys-320. Cys-139 is an active-site residue. Active-site residues include His-278 and Asn-298.

This sequence belongs to the peptidase C1 family. As to quaternary structure, monomer.

It is found in the lysosome. The protein resides in the secreted. Its subcellular location is the cytoplasmic vesicle. The protein localises to the phagosome. It catalyses the reaction Similar to cathepsin L, but with much less activity on Z-Phe-Arg-|-NHMec, and more activity on the Z-Val-Val-Arg-|-Xaa compound.. Its function is as follows. Thiol protease. Key protease responsible for the removal of the invariant chain from MHC class II molecules and MHC class II antigen presentation. The bond-specificity of this proteinase is in part similar to the specificities of cathepsin L. The sequence is that of Cathepsin S (CTSS) from Bos taurus (Bovine).